Here is a 427-residue protein sequence, read N- to C-terminus: Putative F-box/FBD/LRR-repeat protein At4g13965 (427 aa).

One can recognise an F-box domain in the interval 13–61 (ADRISQLPEALIIQILSLLPTEVAVTTSVLSKQWQFLWKMLPKLNFDSL). LRR repeat units follow at residues 67–93 (FKTF…HLIV), 98–122 (CNSM…VLEV), 141–168 (TLEL…HLHY), 169–194 (VDFK…VVHR), 213–241 (LTIY…KIVG), and 258–284 (SMIV…FLEF). One can recognise an FBD domain in the interval 346 to 396 (KWNKPKIVPECLLFHLETFMWKGYEWKRNDETEVAKYILSNTNRLKRATFF).

The sequence is that of Putative F-box/FBD/LRR-repeat protein At4g13965 from Arabidopsis thaliana (Mouse-ear cress).